The following is a 348-amino-acid chain: Dihydroorotase (348 aa).

Positions 17 and 19 each coordinate Zn(2+). Substrate is bound by residues 19–21 and Asn45; that span reads HLR. Lys103, His140, and His178 together coordinate Zn(2+). Lys103 carries the post-translational modification N6-carboxylysine. Position 140 (His140) interacts with substrate. Leu223 provides a ligand contact to substrate. Asp251 is a binding site for Zn(2+). Residue Asp251 is part of the active site. The substrate site is built by His255 and Ala267.

This sequence belongs to the metallo-dependent hydrolases superfamily. DHOase family. Class II DHOase subfamily. Homodimer. Requires Zn(2+) as cofactor.

The enzyme catalyses (S)-dihydroorotate + H2O = N-carbamoyl-L-aspartate + H(+). The protein operates within pyrimidine metabolism; UMP biosynthesis via de novo pathway; (S)-dihydroorotate from bicarbonate: step 3/3. Its function is as follows. Catalyzes the reversible cyclization of carbamoyl aspartate to dihydroorotate. The sequence is that of Dihydroorotase from Salmonella arizonae (strain ATCC BAA-731 / CDC346-86 / RSK2980).